The sequence spans 476 residues: Aspartyl/glutamyl-tRNA(Asn/Gln) amidotransferase subunit B (476 aa).

Belongs to the GatB/GatE family. GatB subfamily. Heterotrimer of A, B and C subunits.

It carries out the reaction L-glutamyl-tRNA(Gln) + L-glutamine + ATP + H2O = L-glutaminyl-tRNA(Gln) + L-glutamate + ADP + phosphate + H(+). The enzyme catalyses L-aspartyl-tRNA(Asn) + L-glutamine + ATP + H2O = L-asparaginyl-tRNA(Asn) + L-glutamate + ADP + phosphate + 2 H(+). Functionally, allows the formation of correctly charged Asn-tRNA(Asn) or Gln-tRNA(Gln) through the transamidation of misacylated Asp-tRNA(Asn) or Glu-tRNA(Gln) in organisms which lack either or both of asparaginyl-tRNA or glutaminyl-tRNA synthetases. The reaction takes place in the presence of glutamine and ATP through an activated phospho-Asp-tRNA(Asn) or phospho-Glu-tRNA(Gln). The sequence is that of Aspartyl/glutamyl-tRNA(Asn/Gln) amidotransferase subunit B from Listeria innocua serovar 6a (strain ATCC BAA-680 / CLIP 11262).